The primary structure comprises 258 residues: Thrombin-like enzyme ancrod-2 (258 aa).

A signal peptide spans 1 to 18 (MVLIRVLANLVILQLSYA). Residues 19–24 (QKSSEL) constitute a propeptide that is removed on maturation. The 227-residue stretch at 25–251 (VIGGDECNIN…HLHWILSIMA (227 aa)) folds into the Peptidase S1 domain. Disulfide bonds link cysteine 31-cysteine 165, cysteine 52-cysteine 68, cysteine 102-cysteine 256, cysteine 144-cysteine 212, cysteine 176-cysteine 191, and cysteine 202-cysteine 227. Active-site charge relay system residues include histidine 67 and aspartate 112. N-linked (GlcNAc...) asparagine glycans are attached at residues asparagine 123 and asparagine 172. Residue serine 206 is the Charge relay system of the active site. A glycan (N-linked (GlcNAc...) asparagine) is linked at asparagine 253.

It belongs to the peptidase S1 family. Snake venom subfamily. In terms of assembly, monomer. As to expression, expressed by the venom gland.

Its subcellular location is the secreted. It carries out the reaction Selective cleavage of Arg-|-Xaa bond in fibrinogen, to form fibrin, and release fibrinopeptide A. The specificity of further degradation of fibrinogen varies with species origin of the enzyme.. Its function is as follows. Thrombin-like snake venom serine protease. Cleaves fibrinogen (FGA) to split of fibrinopeptides AM, AO, and AY; the aberrant fibrinogen is then incapable of being cross-linked, forming easily dispersible clots. In Calloselasma rhodostoma (Malayan pit viper), this protein is Thrombin-like enzyme ancrod-2.